A 428-amino-acid polypeptide reads, in one-letter code: Glutamyl-tRNA reductase (428 aa).

Residues 49 to 52 (TCNR), Ser109, 114 to 116 (EGQ), and Gln120 each bind substrate. The active-site Nucleophile is the Cys50. Residue 189–194 (GAGKMA) coordinates NADP(+).

Belongs to the glutamyl-tRNA reductase family. As to quaternary structure, homodimer.

It carries out the reaction (S)-4-amino-5-oxopentanoate + tRNA(Glu) + NADP(+) = L-glutamyl-tRNA(Glu) + NADPH + H(+). The protein operates within porphyrin-containing compound metabolism; protoporphyrin-IX biosynthesis; 5-aminolevulinate from L-glutamyl-tRNA(Glu): step 1/2. It functions in the pathway porphyrin-containing compound metabolism; chlorophyll biosynthesis. In terms of biological role, catalyzes the NADPH-dependent reduction of glutamyl-tRNA(Glu) to glutamate 1-semialdehyde (GSA). This Rippkaea orientalis (strain PCC 8801 / RF-1) (Cyanothece sp. (strain PCC 8801)) protein is Glutamyl-tRNA reductase.